A 635-amino-acid chain; its full sequence is Probable ethylene response sensor 2 (635 aa).

The next 3 membrane-spanning stretches (helical) occupy residues 24-44 (ISDF…IYFV), 59-79 (FGAF…TFAI), and 94-114 (ATAV…PDLL). Cu cation-binding residues include Cys-66 and His-70. Residues 159–308 (DRHTILRTTL…VVADQVAVAL (150 aa)) enclose the GAF domain. A Histidine kinase domain is found at 351–589 (VMNHEMRTPM…MFFVKLGMPE (239 aa)). His-354 carries the post-translational modification Phosphohistidine; by autocatalysis.

Belongs to the ethylene receptor family. As to quaternary structure, homodimer. Cu cation serves as cofactor. As to expression, expressed in anthers and hulls.

The protein resides in the endoplasmic reticulum membrane. It catalyses the reaction ATP + protein L-histidine = ADP + protein N-phospho-L-histidine.. Ethylene receptor related to bacterial two-component regulators. Acts as a negative regulator of ethylene signaling. May play a role in the regulation of flowering by up-regulating GI (GIGANTEA) and RCN1 and regulate starch accumulation by down-regulating the alpha-amylase AMY3D. This chain is Probable ethylene response sensor 2, found in Oryza sativa subsp. indica (Rice).